A 480-amino-acid polypeptide reads, in one-letter code: Aromatic-L-amino-acid decarboxylase (480 aa).

Met-1 carries the post-translational modification N-acetylmethionine. 2 consecutive repeat copies span residues 58–115 (GDIE…TELE) and 118–178 (MLDW…TQAA). Residues 58–178 (GDIERIIMPG…AASPELTQAA (121 aa)) form a 2 X approximate tandem repeats region. Thr-82 is a substrate binding site. Positions 148 and 149 each coordinate pyridoxal 5'-phosphate. Residue His-192 participates in substrate binding. The pyridoxal 5'-phosphate site is built by Thr-246 and Asn-300. Lys-303 is subject to N6-(pyridoxal phosphate)lysine.

It belongs to the group II decarboxylase family. As to quaternary structure, homodimer. The cofactor is pyridoxal 5'-phosphate.

The enzyme catalyses L-dopa + H(+) = dopamine + CO2. It catalyses the reaction 5-hydroxy-L-tryptophan + H(+) = serotonin + CO2. The protein operates within catecholamine biosynthesis; dopamine biosynthesis; dopamine from L-tyrosine: step 2/2. Catalyzes the decarboxylation of L-3,4-dihydroxyphenylalanine (DOPA) to dopamine and L-5-hydroxytryptophan to serotonin. In Cavia porcellus (Guinea pig), this protein is Aromatic-L-amino-acid decarboxylase (DDC).